We begin with the raw amino-acid sequence, 375 residues long: MKFELDTTDGRARRGRLVFDRGVVETPAFMPVGTYGTVKGMTPEEVEATGAQIILGNTFHLWLRPGQEIMKLHGDLHDFMQWKGPILTDSGGFQVFSLGDIRKITEQGVHFRNPINGDPIFLDPEKSMEIQYDLGSDIVMIFDECTPYPADWDYAKRSMEMSLRWAKRSRDRFDGLGNKNALFGIIQGSVYEDLRDISVKGLVEIGFDGYAVGGLAVGEPKEDMHRILEHVCPQIPADKPRYLMGVGKPEDLVEGVRRGIDMFDCVMPTRNARNGHLFVTDGVVKIRNAKHKSDTSPLDAECDCYTCRNYSRAYLHHLDRCNEILGARLNTIHNLRYYQRLMAGLRKAIEEGKLESFVTDFYQRQGRPVPPLNVD.

Aspartate 89 functions as the Proton acceptor in the catalytic mechanism. Substrate is bound by residues 89 to 93, aspartate 143, glutamine 187, and glycine 214; that span reads DSGGF. Residues 245-251 form an RNA binding region; that stretch reads GVGKPED. Catalysis depends on aspartate 264, which acts as the Nucleophile. The RNA binding; important for wobble base 34 recognition stretch occupies residues 269–273; sequence TRNAR. Cysteine 302, cysteine 304, cysteine 307, and histidine 333 together coordinate Zn(2+).

The protein belongs to the queuine tRNA-ribosyltransferase family. As to quaternary structure, homodimer. Within each dimer, one monomer is responsible for RNA recognition and catalysis, while the other monomer binds to the replacement base PreQ1. The cofactor is Zn(2+).

The enzyme catalyses 7-aminomethyl-7-carbaguanine + guanosine(34) in tRNA = 7-aminomethyl-7-carbaguanosine(34) in tRNA + guanine. Its pathway is tRNA modification; tRNA-queuosine biosynthesis. Functionally, catalyzes the base-exchange of a guanine (G) residue with the queuine precursor 7-aminomethyl-7-deazaguanine (PreQ1) at position 34 (anticodon wobble position) in tRNAs with GU(N) anticodons (tRNA-Asp, -Asn, -His and -Tyr). Catalysis occurs through a double-displacement mechanism. The nucleophile active site attacks the C1' of nucleotide 34 to detach the guanine base from the RNA, forming a covalent enzyme-RNA intermediate. The proton acceptor active site deprotonates the incoming PreQ1, allowing a nucleophilic attack on the C1' of the ribose to form the product. After dissociation, two additional enzymatic reactions on the tRNA convert PreQ1 to queuine (Q), resulting in the hypermodified nucleoside queuosine (7-(((4,5-cis-dihydroxy-2-cyclopenten-1-yl)amino)methyl)-7-deazaguanosine). The protein is Queuine tRNA-ribosyltransferase of Citrobacter koseri (strain ATCC BAA-895 / CDC 4225-83 / SGSC4696).